The primary structure comprises 318 residues: Thymidylate synthase (318 aa).

DUMP contacts are provided by residues Arg25 and 180–181; that span reads RR. The Nucleophile role is filled by Cys200. DUMP contacts are provided by residues 220 to 223, Asn231, and 261 to 263; these read RSGD and HIY. Residue Asp223 coordinates (6R)-5,10-methylene-5,6,7,8-tetrahydrofolate. Ala317 provides a ligand contact to (6R)-5,10-methylene-5,6,7,8-tetrahydrofolate.

Belongs to the thymidylate synthase family. Bacterial-type ThyA subfamily. As to quaternary structure, homodimer.

The protein localises to the cytoplasm. It catalyses the reaction dUMP + (6R)-5,10-methylene-5,6,7,8-tetrahydrofolate = 7,8-dihydrofolate + dTMP. Its pathway is pyrimidine metabolism; dTTP biosynthesis. Its function is as follows. Catalyzes the reductive methylation of 2'-deoxyuridine-5'-monophosphate (dUMP) to 2'-deoxythymidine-5'-monophosphate (dTMP) while utilizing 5,10-methylenetetrahydrofolate (mTHF) as the methyl donor and reductant in the reaction, yielding dihydrofolate (DHF) as a by-product. This enzymatic reaction provides an intracellular de novo source of dTMP, an essential precursor for DNA biosynthesis. The sequence is that of Thymidylate synthase from Lactobacillus acidophilus (strain ATCC 700396 / NCK56 / N2 / NCFM).